Consider the following 164-residue polypeptide: Cell division protein SepF (164 aa).

A disordered region spans residues Y21–E71. Positions Q22–V54 are enriched in low complexity.

This sequence belongs to the SepF family. As to quaternary structure, homodimer. Interacts with FtsZ.

It is found in the cytoplasm. In terms of biological role, cell division protein that is part of the divisome complex and is recruited early to the Z-ring. Probably stimulates Z-ring formation, perhaps through the cross-linking of FtsZ protofilaments. Its function overlaps with FtsA. The protein is Cell division protein SepF of Clavibacter michiganensis subsp. michiganensis (strain NCPPB 382).